A 421-amino-acid polypeptide reads, in one-letter code: Glutamate-1-semialdehyde 2,1-aminomutase 1 (421 aa).

K258 carries the N6-(pyridoxal phosphate)lysine modification.

Belongs to the class-III pyridoxal-phosphate-dependent aminotransferase family. HemL subfamily. Pyridoxal 5'-phosphate is required as a cofactor.

It is found in the cytoplasm. It catalyses the reaction (S)-4-amino-5-oxopentanoate = 5-aminolevulinate. Its pathway is porphyrin-containing compound metabolism; protoporphyrin-IX biosynthesis; 5-aminolevulinate from L-glutamyl-tRNA(Glu): step 2/2. This Cenarchaeum symbiosum (strain A) protein is Glutamate-1-semialdehyde 2,1-aminomutase 1.